The following is a 306-amino-acid chain: Homoserine kinase (306 aa).

Residue 95 to 105 (PQSRGLGSSAA) coordinates ATP.

This sequence belongs to the GHMP kinase family. Homoserine kinase subfamily.

It is found in the cytoplasm. It catalyses the reaction L-homoserine + ATP = O-phospho-L-homoserine + ADP + H(+). Its pathway is amino-acid biosynthesis; L-threonine biosynthesis; L-threonine from L-aspartate: step 4/5. Catalyzes the ATP-dependent phosphorylation of L-homoserine to L-homoserine phosphate. The polypeptide is Homoserine kinase (Corynebacterium urealyticum (strain ATCC 43042 / DSM 7109)).